Consider the following 876-residue polypeptide: Importin subunit beta-1 (876 aa).

Met-1 bears the N-acetylmethionine mark. HEAT repeat units lie at residues 3–29, 32–62, 85–120, 129–160, and 170–201; these read LITI…ERAA, NLPT…LQIK, ANAR…ACAE, LIPQ…ICQD, and SNEI…LLNS. The residue at position 12 (Ser-12) is a Phosphoserine. In terms of domain architecture, Importin N-terminal spans 21–101; sequence AQKFLERAAV…KNYVLQTLGT (81 aa). Lys-211 is subject to N6-acetyllysine. HEAT repeat units lie at residues 212-247, 260-302, 314-359, 363-392, 399-438, 449-485, 500-537, 544-592, 597-639, 644-680, 686-724, 729-777, 785-828, and 834-875; these read ESER…IMSL, LFAI…EAAE, YAKG…STCC, IVPH…AFGS, PNQL…ICEL, LAPL…YEAA, SSSF…EIVK, YPAV…QNVL, HQDA…VEVL, LKYM…LCRA, LPFC…ALAI, KKYL…QGLK, PDVM…LCTA, and LKLV…LKNQ. An essential for high affinity interaction with RPL23A region spans residues 286–462; the sequence is VCDEEMDLAI…LQCLIEGLSA (177 aa). The tract at residues 329–342 is IAB-binding; it reads TLTKQDENDDDDDW. The segment at 334–419 is ran-GTP binding; that stretch reads DENDDDDDWN…MPTLIELMKD (86 aa). Lys-835 and Lys-867 each carry N6-acetyllysine.

It belongs to the importin beta family. Importin beta-1 subfamily. In terms of assembly, forms a complex with an importin alpha subunit. Interacts with XPO1. Forms a heterodimer with IPO7. The KPNB1/IPO7 heterodimer interacts with H1 histone. Interacts with SNUPN. Interacts with H2A, H2B, H3 and H4 histones. Component of an import snRNP complex composed of KPNB1, SNUPN, SMN1 and ZNF259. Component of a nuclear export receptor complex composed of KPNB1, Ran, SNUPN and XPO1. Interacts with SRY. Interacts with PRKCI/atypical protein kinase C iota. Interacts with KPNA2. Interacts with KPNA7. Interacts with SNAI1 (via zinc fingers) and SNAI2 (via zinc fingers). Interacts with SLC35G1 and STIM1. Interacts with DCAF8. Interacts with RAN. Interacts with NUMA1 (via C-terminus); this interaction is inhibited by RanGTP. Interacts with ZBED1/hDREF; required for nuclear import of ZBED1/hDREF. Interacts with SRP19. Interacts with RPL23A (via BIB domain), RPS7 and RPL5. Mono-ADP-ribosylated by PARP16.

The protein localises to the cytoplasm. The protein resides in the nucleus envelope. Functions in nuclear protein import, either in association with an adapter protein, like an importin-alpha subunit, which binds to nuclear localization signals (NLS) in cargo substrates, or by acting as autonomous nuclear transport receptor. Acting autonomously, serves itself as NLS receptor. Docking of the importin/substrate complex to the nuclear pore complex (NPC) is mediated by KPNB1 through binding to nucleoporin FxFG repeats and the complex is subsequently translocated through the pore by an energy requiring, Ran-dependent mechanism. At the nucleoplasmic side of the NPC, Ran binds to importin-beta and the three components separate and importin-alpha and -beta are re-exported from the nucleus to the cytoplasm where GTP hydrolysis releases Ran from importin. The directionality of nuclear import is thought to be conferred by an asymmetric distribution of the GTP- and GDP-bound forms of Ran between the cytoplasm and nucleus. Mediates autonomously the nuclear import of ribosomal proteins RPL23A, RPS7 and RPL5. In association with IPO7, mediates the nuclear import of H1 histone. In vitro, mediates nuclear import of H2A, H2B, H3 and H4 histones. Imports MRTFA, SNAI1 and PRKCI into the nucleus. The chain is Importin subunit beta-1 (Kpnb1) from Mus musculus (Mouse).